We begin with the raw amino-acid sequence, 422 residues long: MAIKPRTKGKTYSSRSVGSQWFNRLGFKQNKYGTCKFLSIITAFVFILYFFSNRFYPISRSAGASYSPSHGLYINEIPASSRLIYPHVEHVPVLKQMTVRGLYITRLEVDGSKRLILKPEENALTDEEKKKTTDQILLVKHSFLDHGKLVYRKSNDAPEVVVVTLIDFENYELETIIQIVQNRVDYAQKHQYGVYIRWIQEFLPVLENQNLAESYEFIKPLVIRAAMHAFPTAKYIHFVDQDALLMNLDLSLQKYLLDPKIMDLALLKNVPVVANSNIKTYNHFEYSSAKIIIPHDADGNIDASSFVIANDFYGKALIDYLNDPLLRNFPWDNTGDKLSAAIGHILQWHPTLLGKTAIVIPKVLASQYDASLDQEGESGNGASNGDVYHYNEGDLAASFKGCRSRGTCASEIGHMYQKIKKS.

The Cytoplasmic segment spans residues 1-31; sequence MAIKPRTKGKTYSSRSVGSQWFNRLGFKQNK. The chain crosses the membrane as a helical; Signal-anchor for type II membrane protein span at residues 32 to 52; the sequence is YGTCKFLSIITAFVFILYFFS. Residues 53–422 are Lumenal-facing; that stretch reads NRFYPISRSA…GHMYQKIKKS (370 aa).

The protein belongs to the glycosyltransferase 34 family. In terms of assembly, component of the M-Pol II complex composed of ANP1, MNN9, MNN10, MNN11 and HOC1.

The protein resides in the golgi apparatus. Its subcellular location is the cis-Golgi network membrane. Its function is as follows. Required for synthesis of full-length mannan chains. Functionally, the M-Pol II complex possesses alpha-1,6-mannosyltransferase activity and is probably involved in the elongation of the mannan backbone of N-linked glycans on cell wall and periplasmic proteins. In Saccharomyces cerevisiae (strain ATCC 204508 / S288c) (Baker's yeast), this protein is Probable alpha-1,6-mannosyltransferase MNN11 (MNN11).